The following is a 211-amino-acid chain: Prolactin-1 (211 aa).

The first 23 residues, 1–23, serve as a signal peptide directing secretion; it reads MARRSQGTKLHLAVLCLVVSCHA. Intrachain disulfides connect Cys69–Cys184 and Cys201–Cys211.

The protein belongs to the somatotropin/prolactin family.

The protein localises to the secreted. The chain is Prolactin-1 (prl1) from Oncorhynchus keta (Chum salmon).